The chain runs to 43 residues: Protein PsbN (43 aa).

The helical transmembrane segment at 7–27 (LSIAIGSILLVITGFAIYTAF) threads the bilayer.

The protein belongs to the PsbN family.

It is found in the cellular thylakoid membrane. Functionally, may play a role in photosystem I and II biogenesis. This is Protein PsbN from Crocosphaera subtropica (strain ATCC 51142 / BH68) (Cyanothece sp. (strain ATCC 51142)).